Reading from the N-terminus, the 102-residue chain is Large ribosomal subunit protein uL24 (102 aa).

This sequence belongs to the universal ribosomal protein uL24 family. In terms of assembly, part of the 50S ribosomal subunit.

Functionally, one of two assembly initiator proteins, it binds directly to the 5'-end of the 23S rRNA, where it nucleates assembly of the 50S subunit. One of the proteins that surrounds the polypeptide exit tunnel on the outside of the subunit. This is Large ribosomal subunit protein uL24 from Cupriavidus necator (strain ATCC 17699 / DSM 428 / KCTC 22496 / NCIMB 10442 / H16 / Stanier 337) (Ralstonia eutropha).